The chain runs to 170 residues: uncharacterized protein (170 aa).

This is an uncharacterized protein from Bacillus subtilis (strain 168).